The following is a 726-amino-acid chain: Dipeptidyl-peptidase 5 (726 aa).

A signal peptide spans M1–A19. N-linked (GlcNAc...) asparagine glycosylation is found at N96 and N252. A disordered region spans residues V268–V292. A glycan (N-linked (GlcNAc...) asparagine) is linked at N485. S558 functions as the Charge relay system in the catalytic mechanism. The N-linked (GlcNAc...) asparagine glycan is linked to N605. Catalysis depends on charge relay system residues D641 and H673. N699 is a glycosylation site (N-linked (GlcNAc...) asparagine).

This sequence belongs to the peptidase S9C family.

It localises to the secreted. Its function is as follows. Extracellular dipeptidyl-peptidase which removes N-terminal dipeptides sequentially from polypeptides having unsubstituted N-termini. Contributes to pathogenicity. This is Dipeptidyl-peptidase 5 (DPP5) from Arthroderma otae (strain ATCC MYA-4605 / CBS 113480) (Microsporum canis).